Reading from the N-terminus, the 87-residue chain is Probable Fe(2+)-trafficking protein (87 aa).

The protein belongs to the Fe(2+)-trafficking protein family.

Could be a mediator in iron transactions between iron acquisition and iron-requiring processes, such as synthesis and/or repair of Fe-S clusters in biosynthetic enzymes. This chain is Probable Fe(2+)-trafficking protein, found in Francisella tularensis subsp. mediasiatica (strain FSC147).